The following is a 95-amino-acid chain: MTKSELIERLAGQQSHIPAKVVEDAVKEMLEHMATTLSEGERIEIRGFGSFSLHYRAPRTGRNPKTGDKVELEGKYVPHFKPGKELRDRANIYGG.

This sequence belongs to the bacterial histone-like protein family. As to quaternary structure, heterodimer of an alpha and a beta chain.

Its function is as follows. This protein is one of the two subunits of integration host factor, a specific DNA-binding protein that functions in genetic recombination as well as in transcriptional and translational control. This Erwinia tasmaniensis (strain DSM 17950 / CFBP 7177 / CIP 109463 / NCPPB 4357 / Et1/99) protein is Integration host factor subunit beta.